Reading from the N-terminus, the 1042-residue chain is Isoleucine--tRNA ligase (1042 aa).

The 'HIGH' region signature appears at 48-58; that stretch reads PFATGLPHFGH. Residues 594–598 carry the 'KMSKS' region motif; that stretch reads KMSKS. K597 serves as a coordination point for ATP.

Belongs to the class-I aminoacyl-tRNA synthetase family. IleS type 2 subfamily. Monomer. It depends on Zn(2+) as a cofactor.

Its subcellular location is the cytoplasm. It catalyses the reaction tRNA(Ile) + L-isoleucine + ATP = L-isoleucyl-tRNA(Ile) + AMP + diphosphate. Catalyzes the attachment of isoleucine to tRNA(Ile). As IleRS can inadvertently accommodate and process structurally similar amino acids such as valine, to avoid such errors it has two additional distinct tRNA(Ile)-dependent editing activities. One activity is designated as 'pretransfer' editing and involves the hydrolysis of activated Val-AMP. The other activity is designated 'posttransfer' editing and involves deacylation of mischarged Val-tRNA(Ile). The sequence is that of Isoleucine--tRNA ligase from Borrelia garinii subsp. bavariensis (strain ATCC BAA-2496 / DSM 23469 / PBi) (Borreliella bavariensis).